The primary structure comprises 272 residues: ATP synthase subunit delta (272 aa).

Belongs to the ATPase delta chain family. In terms of assembly, F-type ATPases have 2 components, F(1) - the catalytic core - and F(0) - the membrane proton channel. F(1) has five subunits: alpha(3), beta(3), gamma(1), delta(1), epsilon(1). F(0) has three main subunits: a(1), b(2) and c(10-14). The alpha and beta chains form an alternating ring which encloses part of the gamma chain. F(1) is attached to F(0) by a central stalk formed by the gamma and epsilon chains, while a peripheral stalk is formed by the delta and b chains.

It localises to the cell membrane. Its function is as follows. F(1)F(0) ATP synthase produces ATP from ADP in the presence of a proton or sodium gradient. F-type ATPases consist of two structural domains, F(1) containing the extramembraneous catalytic core and F(0) containing the membrane proton channel, linked together by a central stalk and a peripheral stalk. During catalysis, ATP synthesis in the catalytic domain of F(1) is coupled via a rotary mechanism of the central stalk subunits to proton translocation. This protein is part of the stalk that links CF(0) to CF(1). It either transmits conformational changes from CF(0) to CF(1) or is implicated in proton conduction. The protein is ATP synthase subunit delta of Corynebacterium jeikeium (strain K411).